A 258-amino-acid polypeptide reads, in one-letter code: Isoprenyl transferase (258 aa).

Aspartate 38 is a catalytic residue. Aspartate 38 is a binding site for Mg(2+). Substrate-binding positions include 39 to 42 (GNGR), tryptophan 43, arginine 51, histidine 55, and 83 to 85 (STE). Asparagine 86 serves as the catalytic Proton acceptor. Residues tryptophan 87, arginine 89, arginine 206, and 212 to 214 (RIS) contribute to the substrate site. Glutamate 225 is a binding site for Mg(2+).

It belongs to the UPP synthase family. In terms of assembly, homodimer. It depends on Mg(2+) as a cofactor.

Functionally, catalyzes the condensation of isopentenyl diphosphate (IPP) with allylic pyrophosphates generating different type of terpenoids. The sequence is that of Isoprenyl transferase from Bacillus thuringiensis subsp. konkukian (strain 97-27).